The primary structure comprises 483 residues: MKAFHTFCVVLLVFGSVSEAKFDDFEDEEDIVEYDDNDFAEFEDVMEDSVTESPQRVIITEDDEDETTVELEGQDENQEGDFEDADTQEGDTESEPYDDEEFEGYEDKPDTSSSKNKDPITIVDVPAHLQNSWESYYLEILMVTGLLAYIMNYIIGKNKNSRLAQAWFNTHRELLESNFTLVGDDGTNKEATSTGKLNQENEHIYNLWCSGRVCCEGMLIQLRFLKRQDLLNVLARMMRPVSDQVQIKVTMNDEDMDTYVFAVGTRKALVRLQKEMQDLSEFCSDKPKSGAKYGLPDSLAILSEMGEVTDGMMDTKMVHFLTHYADKIESVHFSDQFSGPKIMQEEGQPLKLPDTKRTLLFTFNVPGSGNTYPKDMEALLPLMNMVIYSIDKAKKFRLNREGKQKADKNRARVEENFLKLTHVQRQEAAQSRREEKKRAEKERIMNEEDPEKQRRLEEAALRREQKKLEKKQMKMKQIKVKAM.

The N-terminal stretch at 1–20 is a signal peptide; that stretch reads MKAFHTFCVVLLVFGSVSEA. The Cytoplasmic segment spans residues 21–135; the sequence is KFDDFEDEED…PAHLQNSWES (115 aa). Residues 46–118 form a disordered region; that stretch reads MEDSVTESPQ…PDTSSSKNKD (73 aa). Residues 60–104 show a composition bias toward acidic residues; sequence TEDDEDETTVELEGQDENQEGDFEDADTQEGDTESEPYDDEEFEG. Over residues 105-118 the composition is skewed to basic and acidic residues; that stretch reads YEDKPDTSSSKNKD. Residues 136-155 traverse the membrane as a helical segment; the sequence is YYLEILMVTGLLAYIMNYII. Residues 156 to 483 are Lumenal-facing; that stretch reads GKNKNSRLAQ…KMKQIKVKAM (328 aa). N-linked (GlcNAc...) asparagine glycosylation occurs at Asn178. The tract at residues 424–483 is disordered; it reads QRQEAAQSRREEKKRAEKERIMNEEDPEKQRRLEEAALRREQKKLEKKQMKMKQIKVKAM. The span at 430 to 472 shows a compositional bias: basic and acidic residues; that stretch reads QSRREEKKRAEKERIMNEEDPEKQRRLEEAALRREQKKLEKKQ. Residues 450–483 are a coiled coil; that stretch reads PEKQRRLEEAALRREQKKLEKKQMKMKQIKVKAM. A compositionally biased stretch (basic residues) spans 473-483; sequence MKMKQIKVKAM.

Belongs to the CCDC47 family. Component of the PAT complex, composed of WDR83OS/Asterix and CCDC47. The PAT complex is part of the multi-pass translocon (MPT) complex, composed of three subcomplexes, the GEL complex (composed of RAB5IF/OPTI and TMCO1), the BOS complex (composed of NCLN/Nicalin, NOMO and TMEM147) and the PAT complex (composed of WDR83OS/Asterix and CCDC47). The MPT complex associates with the SEC61 complex. Interacts with VCP, HSPA5, DERL1, DERL2 and SELENOS.

The protein localises to the endoplasmic reticulum membrane. It is found in the rough endoplasmic reticulum membrane. Its function is as follows. Component of the multi-pass translocon (MPT) complex that mediates insertion of multi-pass membrane proteins into the lipid bilayer of membranes. The MPT complex takes over after the SEC61 complex: following membrane insertion of the first few transmembrane segments of proteins by the SEC61 complex, the MPT complex occludes the lateral gate of the SEC61 complex to promote insertion of subsequent transmembrane regions. Within the MPT complex, the PAT subcomplex sequesters any highly polar regions in the transmembrane domains away from the non-polar membrane environment until they can be buried in the interior of the fully assembled protein. Within the PAT subcomplex, CCDC47 occludes the lateral gate of the SEC61 complex. Involved in the regulation of calcium ion homeostasis in the ER. Required for proper protein degradation via the ERAD (ER-associated degradation) pathway. Has an essential role in the maintenance of ER organization during embryogenesis. The polypeptide is PAT complex subunit CCDC47 (Homo sapiens (Human)).